A 410-amino-acid polypeptide reads, in one-letter code: Translation initiation factor 2 subunit gamma (410 aa).

The region spanning 9–202 is the tr-type G domain; the sequence is QAEVNIGMVG…AIEEFIPTPE (194 aa). Residues 18-25 form a G1 region; sequence GHVDHGKT. Residues Asp21, Thr25, Gly46, and Thr48 each contribute to the Mg(2+) site. Residue 21–26 coordinates GTP; it reads DHGKTT. The tract at residues 46–50 is G2; sequence GITIK. Cys61, Cys64, Cys73, and Cys76 together coordinate Zn(2+). Residues 90 to 93 are G3; sequence DAPG. GTP contacts are provided by residues 145–148 and 180–182; these read NKIE and SAL. The interval 145-148 is G4; the sequence is NKIE. The interval 180–182 is G5; that stretch reads SAL.

This sequence belongs to the TRAFAC class translation factor GTPase superfamily. Classic translation factor GTPase family. EIF2G subfamily. In terms of assembly, heterotrimer composed of an alpha, a beta and a gamma chain. The cofactor is Mg(2+).

It catalyses the reaction GTP + H2O = GDP + phosphate + H(+). EIF-2 functions in the early steps of protein synthesis by forming a ternary complex with GTP and initiator tRNA. In Thermococcus onnurineus (strain NA1), this protein is Translation initiation factor 2 subunit gamma.